The chain runs to 832 residues: Protein P (832 aa).

Positions 1–177 are terminal protein domain (TP); sequence MPLSYQHFRR…FCGSPYSWEQ (177 aa). Residues 178 to 335 form a spacer region; the sequence is ELQHGAESFH…YCLSHIVNLL (158 aa). Residues 241–263 are disordered; that stretch reads RRPFGVEPSGSGHTTNLASKSAS. Over residues 251–263 the composition is skewed to polar residues; sequence SGHTTNLASKSAS. The tract at residues 336-679 is polymerase/reverse transcriptase domain (RT); the sequence is EDWGPCAEHG…YLNLYPVARQ (344 aa). In terms of domain architecture, Reverse transcriptase spans 346 to 589; that stretch reads EHHIRIPRTP…YSLHFMGYVI (244 aa). Positions 418, 540, and 541 each coordinate Mg(2+).

This sequence belongs to the hepadnaviridae P protein family.

The enzyme catalyses DNA(n) + a 2'-deoxyribonucleoside 5'-triphosphate = DNA(n+1) + diphosphate. It carries out the reaction Endonucleolytic cleavage to 5'-phosphomonoester.. With respect to regulation, activated by host HSP70 and HSP40 in vitro to be able to bind the epsilon loop of the pgRNA. Because deletion of the RNase H region renders the protein partly chaperone-independent, the chaperones may be needed indirectly to relieve occlusion of the RNA-binding site by this domain. Inhibited by several reverse-transcriptase inhibitors: Lamivudine, Adefovir and Entecavir. Functionally, multifunctional enzyme that converts the viral RNA genome into dsDNA in viral cytoplasmic capsids. This enzyme displays a DNA polymerase activity that can copy either DNA or RNA templates, and a ribonuclease H (RNase H) activity that cleaves the RNA strand of RNA-DNA heteroduplexes in a partially processive 3'- to 5'-endonucleasic mode. Neo-synthesized pregenomic RNA (pgRNA) are encapsidated together with the P protein, and reverse-transcribed inside the nucleocapsid. Initiation of reverse-transcription occurs first by binding the epsilon loop on the pgRNA genome, and is initiated by protein priming, thereby the 5'-end of (-)DNA is covalently linked to P protein. Partial (+)DNA is synthesized from the (-)DNA template and generates the relaxed circular DNA (RC-DNA) genome. After budding and infection, the RC-DNA migrates in the nucleus, and is converted into a plasmid-like covalently closed circular DNA (cccDNA). The activity of P protein does not seem to be necessary for cccDNA generation, and is presumably released from (+)DNA by host nuclear DNA repair machinery. The sequence is that of Protein P from Homo sapiens (Human).